The sequence spans 142 residues: Hemoglobin subunit alpha (142 aa).

At S1 the chain carries N-acetylserine. The 142-residue stretch at 1–142 folds into the Globin domain; that stretch reads SLSDKDKAVV…LALALSEKYR (142 aa). Residue H59 participates in O2 binding. A heme b-binding site is contributed by H88.

It belongs to the globin family. Heterotetramer of two alpha chains and two beta chains. As to expression, red blood cells.

Its function is as follows. Involved in oxygen transport from gills to the various peripheral tissues. The sequence is that of Hemoglobin subunit alpha (hba) from Carassius auratus (Goldfish).